Consider the following 537-residue polypeptide: CTP synthase (537 aa).

The segment at 1–265 (MVHFIFVTGG…DNKVLKFFNI (265 aa)) is amidoligase domain. A CTP-binding site is contributed by S13. S13 is a UTP binding site. Residues 14-19 (SLGKGL) and D71 each bind ATP. Residues D71 and E139 each contribute to the Mg(2+) site. CTP contacts are provided by residues 146–148 (DIE) and K222. Residue K222 coordinates UTP. One can recognise a Glutamine amidotransferase type-1 domain in the interval 290-536 (RIAIIAKYHK…IKAAIEYNKC (247 aa)). G352 is a binding site for L-glutamine. Residue C379 is the Nucleophile; for glutamine hydrolysis of the active site. L-glutamine-binding positions include 380–383 (FGMQ), E403, and R464. Residues H509 and E511 contribute to the active site.

It belongs to the CTP synthase family. As to quaternary structure, homotetramer.

The catalysed reaction is UTP + L-glutamine + ATP + H2O = CTP + L-glutamate + ADP + phosphate + 2 H(+). The enzyme catalyses L-glutamine + H2O = L-glutamate + NH4(+). It catalyses the reaction UTP + NH4(+) + ATP = CTP + ADP + phosphate + 2 H(+). The protein operates within pyrimidine metabolism; CTP biosynthesis via de novo pathway; CTP from UDP: step 2/2. With respect to regulation, allosterically activated by GTP, when glutamine is the substrate; GTP has no effect on the reaction when ammonia is the substrate. The allosteric effector GTP functions by stabilizing the protein conformation that binds the tetrahedral intermediate(s) formed during glutamine hydrolysis. Inhibited by the product CTP, via allosteric rather than competitive inhibition. Catalyzes the ATP-dependent amination of UTP to CTP with either L-glutamine or ammonia as the source of nitrogen. Regulates intracellular CTP levels through interactions with the four ribonucleotide triphosphates. The protein is CTP synthase of Rickettsia peacockii (strain Rustic).